The sequence spans 163 residues: Large ribosomal subunit protein uL10 (163 aa).

This sequence belongs to the universal ribosomal protein uL10 family. In terms of assembly, part of the ribosomal stalk of the 50S ribosomal subunit. The N-terminus interacts with L11 and the large rRNA to form the base of the stalk. The C-terminus forms an elongated spine to which L12 dimers bind in a sequential fashion forming a multimeric L10(L12)X complex.

In terms of biological role, forms part of the ribosomal stalk, playing a central role in the interaction of the ribosome with GTP-bound translation factors. The protein is Large ribosomal subunit protein uL10 of Histophilus somni (strain 2336) (Haemophilus somnus).